A 158-amino-acid chain; its full sequence is NADPH-dependent 7-cyano-7-deazaguanine reductase (158 aa).

Cysteine 56 serves as the catalytic Thioimide intermediate. The Proton donor role is filled by aspartate 63. Substrate contacts are provided by residues 78-80 and 97-98; these read LES and HE.

Belongs to the GTP cyclohydrolase I family. QueF type 1 subfamily.

It is found in the cytoplasm. It catalyses the reaction 7-aminomethyl-7-carbaguanine + 2 NADP(+) = 7-cyano-7-deazaguanine + 2 NADPH + 3 H(+). The protein operates within tRNA modification; tRNA-queuosine biosynthesis. Catalyzes the NADPH-dependent reduction of 7-cyano-7-deazaguanine (preQ0) to 7-aminomethyl-7-deazaguanine (preQ1). The sequence is that of NADPH-dependent 7-cyano-7-deazaguanine reductase from Rhodopseudomonas palustris (strain TIE-1).